The chain runs to 123 residues: Large ribosomal subunit protein uL18 (123 aa).

The protein belongs to the universal ribosomal protein uL18 family. Part of the 50S ribosomal subunit; part of the 5S rRNA/L5/L18/L25 subcomplex. Contacts the 5S and 23S rRNAs.

Its function is as follows. This is one of the proteins that bind and probably mediate the attachment of the 5S RNA into the large ribosomal subunit, where it forms part of the central protuberance. The chain is Large ribosomal subunit protein uL18 from Bifidobacterium adolescentis (strain ATCC 15703 / DSM 20083 / NCTC 11814 / E194a).